The chain runs to 422 residues: UDP-N-acetylglucosamine 1-carboxyvinyltransferase (422 aa).

22-23 (KN) lines the phosphoenolpyruvate pocket. R93 is a binding site for UDP-N-acetyl-alpha-D-glucosamine. The active-site Proton donor is the C117. At C117 the chain carries 2-(S-cysteinyl)pyruvic acid O-phosphothioketal. Residues 122-126 (RPVDL), D308, and L330 each bind UDP-N-acetyl-alpha-D-glucosamine.

Belongs to the EPSP synthase family. MurA subfamily.

It is found in the cytoplasm. The catalysed reaction is phosphoenolpyruvate + UDP-N-acetyl-alpha-D-glucosamine = UDP-N-acetyl-3-O-(1-carboxyvinyl)-alpha-D-glucosamine + phosphate. The protein operates within cell wall biogenesis; peptidoglycan biosynthesis. Functionally, cell wall formation. Adds enolpyruvyl to UDP-N-acetylglucosamine. In Helicobacter acinonychis (strain Sheeba), this protein is UDP-N-acetylglucosamine 1-carboxyvinyltransferase.